The sequence spans 203 residues: Ribosome maturation factor RimP (203 aa).

The segment at 179 to 203 is disordered; that stretch reads VSSEGEDGGEARQAPKLNPKKPGKK.

Belongs to the RimP family.

The protein localises to the cytoplasm. In terms of biological role, required for maturation of 30S ribosomal subunits. The sequence is that of Ribosome maturation factor RimP from Gluconobacter oxydans (strain 621H) (Gluconobacter suboxydans).